The primary structure comprises 145 residues: 3-hydroxyacyl-[acyl-carrier-protein] dehydratase FabZ (145 aa).

His49 is an active-site residue.

The protein belongs to the thioester dehydratase family. FabZ subfamily.

It is found in the cytoplasm. The enzyme catalyses a (3R)-hydroxyacyl-[ACP] = a (2E)-enoyl-[ACP] + H2O. Functionally, involved in unsaturated fatty acids biosynthesis. Catalyzes the dehydration of short chain beta-hydroxyacyl-ACPs and long chain saturated and unsaturated beta-hydroxyacyl-ACPs. In Rickettsia bellii (strain RML369-C), this protein is 3-hydroxyacyl-[acyl-carrier-protein] dehydratase FabZ.